The primary structure comprises 196 residues: Peptidyl-tRNA hydrolase (196 aa).

Tyrosine 19 is a binding site for tRNA. The active-site Proton acceptor is the histidine 24. Residues tyrosine 68, asparagine 70, and asparagine 116 each contribute to the tRNA site.

This sequence belongs to the PTH family. In terms of assembly, monomer.

It is found in the cytoplasm. The enzyme catalyses an N-acyl-L-alpha-aminoacyl-tRNA + H2O = an N-acyl-L-amino acid + a tRNA + H(+). Its function is as follows. Hydrolyzes ribosome-free peptidyl-tRNAs (with 1 or more amino acids incorporated), which drop off the ribosome during protein synthesis, or as a result of ribosome stalling. In terms of biological role, catalyzes the release of premature peptidyl moieties from peptidyl-tRNA molecules trapped in stalled 50S ribosomal subunits, and thus maintains levels of free tRNAs and 50S ribosomes. The protein is Peptidyl-tRNA hydrolase of Aromatoleum aromaticum (strain DSM 19018 / LMG 30748 / EbN1) (Azoarcus sp. (strain EbN1)).